The following is a 75-amino-acid chain: MAAKPFFRRRKVCPFSGENAPKIDYKDTRLLQRYISERGKIVPSRITAVSAKKQRELARAIKRARFLALLPYAVK.

This sequence belongs to the bacterial ribosomal protein bS18 family. Part of the 30S ribosomal subunit. Forms a tight heterodimer with protein bS6.

In terms of biological role, binds as a heterodimer with protein bS6 to the central domain of the 16S rRNA, where it helps stabilize the platform of the 30S subunit. The protein is Small ribosomal subunit protein bS18 of Ruegeria sp. (strain TM1040) (Silicibacter sp.).